The following is a 469-amino-acid chain: Cysteine--tRNA ligase (469 aa).

Cys33 lines the Zn(2+) pocket. The 'HIGH' region signature appears at 35–45 (ATVQGLPHIGH). Cys211, His236, and Glu240 together coordinate Zn(2+). A 'KMSKS' region motif is present at residues 267–271 (KMSKS). Lys270 lines the ATP pocket.

This sequence belongs to the class-I aminoacyl-tRNA synthetase family. Monomer. Requires Zn(2+) as cofactor.

It localises to the cytoplasm. The enzyme catalyses tRNA(Cys) + L-cysteine + ATP = L-cysteinyl-tRNA(Cys) + AMP + diphosphate. The polypeptide is Cysteine--tRNA ligase (cysS) (Mycobacterium bovis (strain ATCC BAA-935 / AF2122/97)).